The primary structure comprises 145 residues: Large ribosomal subunit protein uL16 (145 aa).

The protein belongs to the universal ribosomal protein uL16 family. Part of the 50S ribosomal subunit.

Functionally, binds 23S rRNA and is also seen to make contacts with the A and possibly P site tRNAs. The sequence is that of Large ribosomal subunit protein uL16 from Lactobacillus gasseri (strain ATCC 33323 / DSM 20243 / BCRC 14619 / CIP 102991 / JCM 1131 / KCTC 3163 / NCIMB 11718 / NCTC 13722 / AM63).